A 255-amino-acid chain; its full sequence is NAD kinase (255 aa).

The active-site Proton acceptor is the Asp-44. Residues 44-45 (DG), His-49, 114-115 (NE), Asp-144, Ala-152, 155-160 (SAYNLS), and Gln-216 contribute to the NAD(+) site.

The protein belongs to the NAD kinase family. Requires a divalent metal cation as cofactor.

The protein localises to the cytoplasm. It catalyses the reaction NAD(+) + ATP = ADP + NADP(+) + H(+). In terms of biological role, involved in the regulation of the intracellular balance of NAD and NADP, and is a key enzyme in the biosynthesis of NADP. Catalyzes specifically the phosphorylation on 2'-hydroxyl of the adenosine moiety of NAD to yield NADP. The chain is NAD kinase from Rickettsia typhi (strain ATCC VR-144 / Wilmington).